The sequence spans 62 residues: Large ribosomal subunit protein uL30 (62 aa).

Belongs to the universal ribosomal protein uL30 family. Part of the 50S ribosomal subunit.

This is Large ribosomal subunit protein uL30 from Kosmotoga olearia (strain ATCC BAA-1733 / DSM 21960 / TBF 19.5.1).